A 208-amino-acid polypeptide reads, in one-letter code: Na(+)-translocating NADH-quinone reductase subunit D (208 aa).

The next 5 helical transmembrane spans lie at 42–62, 72–92, 103–123, 131–151, and 178–198; these read IVMG…ISLV, IIVQ…LLQA, VFVG…AFAM, LIDG…VATV, and NGLF…IWGL.

Belongs to the NqrDE/RnfAE family. Composed of six subunits; NqrA, NqrB, NqrC, NqrD, NqrE and NqrF.

It localises to the cell inner membrane. The catalysed reaction is a ubiquinone + n Na(+)(in) + NADH + H(+) = a ubiquinol + n Na(+)(out) + NAD(+). Functionally, NQR complex catalyzes the reduction of ubiquinone-1 to ubiquinol by two successive reactions, coupled with the transport of Na(+) ions from the cytoplasm to the periplasm. NqrA to NqrE are probably involved in the second step, the conversion of ubisemiquinone to ubiquinol. The chain is Na(+)-translocating NADH-quinone reductase subunit D from Neisseria gonorrhoeae (strain ATCC 700825 / FA 1090).